A 125-amino-acid chain; its full sequence is Large ribosomal subunit protein bL20 (125 aa).

It belongs to the bacterial ribosomal protein bL20 family.

Its function is as follows. Binds directly to 23S ribosomal RNA and is necessary for the in vitro assembly process of the 50S ribosomal subunit. It is not involved in the protein synthesizing functions of that subunit. This chain is Large ribosomal subunit protein bL20, found in Rhodospirillum rubrum (strain ATCC 11170 / ATH 1.1.1 / DSM 467 / LMG 4362 / NCIMB 8255 / S1).